We begin with the raw amino-acid sequence, 426 residues long: UPF0229 protein Csal_0882 (426 aa).

Residues 82-93 (FVEGDRLRRPGG) are compositionally biased toward basic and acidic residues. The tract at residues 82–109 (FVEGDRLRRPGGEGRGGSGEGSASNQGE) is disordered.

Belongs to the UPF0229 family.

The chain is UPF0229 protein Csal_0882 from Chromohalobacter salexigens (strain ATCC BAA-138 / DSM 3043 / CIP 106854 / NCIMB 13768 / 1H11).